The sequence spans 418 residues: Glutamyl-tRNA reductase (418 aa).

Residues 49–52, S109, 114–116, and Q120 each bind substrate; these read TCNR and EPQ. The Nucleophile role is filled by C50. 189–194 serves as a coordination point for NADP(+); that stretch reads GAGETI.

Belongs to the glutamyl-tRNA reductase family. In terms of assembly, homodimer.

The catalysed reaction is (S)-4-amino-5-oxopentanoate + tRNA(Glu) + NADP(+) = L-glutamyl-tRNA(Glu) + NADPH + H(+). Its pathway is porphyrin-containing compound metabolism; protoporphyrin-IX biosynthesis; 5-aminolevulinate from L-glutamyl-tRNA(Glu): step 1/2. Its function is as follows. Catalyzes the NADPH-dependent reduction of glutamyl-tRNA(Glu) to glutamate 1-semialdehyde (GSA). The polypeptide is Glutamyl-tRNA reductase (Enterobacter sp. (strain 638)).